The primary structure comprises 51 residues: Large ribosomal subunit protein eL39 (51 aa).

Belongs to the eukaryotic ribosomal protein eL39 family.

In Thermococcus gammatolerans (strain DSM 15229 / JCM 11827 / EJ3), this protein is Large ribosomal subunit protein eL39.